Reading from the N-terminus, the 205-residue chain is MNKILVDSPFSPDHQKCCPKLFTISAPAGVGKTTLVRMLEQEFSSAFAETISVTTRKPREGEVPGKDYHFVSHEEFQRLLDRQALLEWVFLFGECYGTSMLEIERIWSLGKHAVAVIDIQGALFIRSRMPSVSIFIAPPSQEELERRLASRGSEEGSQRKERLEHSLIELAAANQFDYVIINDDLNQAYRVLKSIFIAEEHRNIL.

Residues 19–197 (PKLFTISAPA…AYRVLKSIFI (179 aa)) enclose the Guanylate kinase-like domain. ATP is bound at residue 26–33 (APAGVGKT).

The protein belongs to the guanylate kinase family.

It localises to the cytoplasm. The catalysed reaction is GMP + ATP = GDP + ADP. In terms of biological role, essential for recycling GMP and indirectly, cGMP. This Chlamydia pneumoniae (Chlamydophila pneumoniae) protein is Guanylate kinase (gmk).